Here is a 464-residue protein sequence, read N- to C-terminus: METPRLMCTQHPDSTVKVPVQEEVEEAVRSFLVYGCDEVMSDYEGKLTPYAQPKEIVVKAGELGVPVGEGFYVTVRAPNPRLEDFDRVDLALEAAVLANYYSYKRLGVQAVRWVVLPMTDSAETVRLVQRLLARKTRVLCEEVGQPCEQAQLVPLLEDVDSLLRVREILRDLHSALAELGSDPGVLRVFLGKSDSALKAGHIASALSLLYALGESAKAGEELGLEVKPILGGGSPPFRGGVNNPRLVGVEVQRYRGYSTVTVQSAVRYDASFSEYQEVRSKLLGGAGGEPGDAGGRVAELARLAASMYRSLASKYLDFVNEYARSVPTTRDRVSWREYGRALELEDKLFSAPRAIVYTAAWYSLGVPPTFLDADFVLEAYRGDFLDEVLGYLPGLEEEWRYDAQFYLPRLAGERLGEELVKKVDEALDAMGLRPEPLEPYEKLARTAPAELRALLLGKVRGFLG.

The protein belongs to the PEPCase type 2 family. Homotetramer. Requires Mg(2+) as cofactor.

The catalysed reaction is oxaloacetate + phosphate = phosphoenolpyruvate + hydrogencarbonate. Catalyzes the irreversible beta-carboxylation of phosphoenolpyruvate (PEP) to form oxaloacetate (OAA), a four-carbon dicarboxylic acid source for the tricarboxylic acid cycle. The sequence is that of Phosphoenolpyruvate carboxylase from Thermofilum pendens (strain DSM 2475 / Hrk 5).